Reading from the N-terminus, the 429-residue chain is CBL-interacting serine/threonine-protein kinase 7 (429 aa).

In terms of domain architecture, Protein kinase spans 25–280; the sequence is YELGRRLGSG…IETVMKTNWF (256 aa). Residues 31-39 and lysine 54 contribute to the ATP site; that span reads LGSGSFAKV. Residue aspartate 149 is the Proton acceptor of the active site. An activation loop region spans residues 167-195; that stretch reads DFGLSALPEHLQNGLLHTACGTPAYTAPE. Position 171 is a phosphoserine (serine 171). Threonine 184 bears the Phosphothreonine mark. An NAF domain is found at 302-326; that stretch reads SSVNSITAFDLISLSSGLDLSGLFE. Positions 330 to 363 are PPI; it reads KKERRFTAKVSGVEVEEKAKMIGEKLGYVVKKKM.

It belongs to the protein kinase superfamily. CAMK Ser/Thr protein kinase family. SNF1 subfamily. Interacts with CBL1, CBL2 and CBL3. The cofactor is Mn(2+). Autophosphorylated. In terms of tissue distribution, strongly expressed in leaves, but barely expressed in roots, stems or flowers.

The catalysed reaction is L-seryl-[protein] + ATP = O-phospho-L-seryl-[protein] + ADP + H(+). The enzyme catalyses L-threonyl-[protein] + ATP = O-phospho-L-threonyl-[protein] + ADP + H(+). Functionally, CIPK serine-threonine protein kinases interact with CBL proteins. Binding of a CBL protein to the regulatory NAF domain of CIPK protein lead to the activation of the kinase in a calcium-dependent manner. Phosphorylates the rice sucrose synthase (SuSy) in vitro in an allosteric manner. Involved in cold response. The chain is CBL-interacting serine/threonine-protein kinase 7 (CIPK7) from Arabidopsis thaliana (Mouse-ear cress).